The following is a 256-amino-acid chain: 5-keto-4-deoxy-D-glucarate aldolase (256 aa).

Histidine 50 functions as the Proton acceptor in the catalytic mechanism. Residue glutamine 151 participates in substrate binding. Glutamate 153 contacts Mg(2+). Residues serine 178 and aspartate 179 each coordinate substrate. Position 179 (aspartate 179) interacts with Mg(2+).

The protein belongs to the HpcH/HpaI aldolase family. KDGluc aldolase subfamily. Homohexamer; trimer of dimers. Requires Mg(2+) as cofactor.

The enzyme catalyses 5-dehydro-4-deoxy-D-glucarate = 2-hydroxy-3-oxopropanoate + pyruvate. It catalyses the reaction 2-dehydro-3-deoxy-D-glucarate = 2-hydroxy-3-oxopropanoate + pyruvate. The protein operates within carbohydrate acid metabolism; galactarate degradation; D-glycerate from galactarate: step 2/3. In terms of biological role, catalyzes the reversible retro-aldol cleavage of both 5-keto-4-deoxy-D-glucarate and 2-keto-3-deoxy-D-glucarate to pyruvate and tartronic semialdehyde. This chain is 5-keto-4-deoxy-D-glucarate aldolase, found in Shigella sonnei (strain Ss046).